The primary structure comprises 166 residues: Small ribosomal subunit protein uS5 (166 aa).

Residues Tyr-12–Val-75 enclose the S5 DRBM domain.

Belongs to the universal ribosomal protein uS5 family. Part of the 30S ribosomal subunit. Contacts proteins S4 and S8.

Functionally, with S4 and S12 plays an important role in translational accuracy. In terms of biological role, located at the back of the 30S subunit body where it stabilizes the conformation of the head with respect to the body. The protein is Small ribosomal subunit protein uS5 of Pseudomonas fluorescens (strain SBW25).